We begin with the raw amino-acid sequence, 143 residues long: Ayaconin (143 aa).

Positions 1 to 22 (MSFLFFLVVLISIGLWVGPCVA) are cleaved as a signal peptide.

As to quaternary structure, interacts with human F12 (inactive). As to expression, salivary gland.

The protein resides in the secreted. Functionally, inhibits the intrinsic blood coagulation pathway in the host by blocking activation of host coagulation factor XII (F12). In Lutzomyia ayacuchensis (Sand fly), this protein is Ayaconin.